Reading from the N-terminus, the 256-residue chain is MDGGYGSVTIVHDARSPEDVFQDFCGRRSGIVKALTIEVEKFYKQCDPEKENLCLYGLPNGTWAVTLPADEVPPELPEPALGHNFARDGMQEKDWLSLIAVHSDSWLLSVAFYFGARFGFDKKARERLFMMTSSLPTVFEVVSGGVNTQSKTANGSSKNKSGSKPPKRPNSDSKPQKQVQAKYEEENGGRGNGGDEDQAETICGACGEAYANGEFWICCDICETWFHGKCVRITPAKAEHIKHYKCPGCSNKRTRE.

The interval 149 to 195 is disordered; sequence QSKTANGSSKNKSGSKPPKRPNSDSKPQKQVQAKYEEENGGRGNGGD. The span at 154–164 shows a compositional bias: low complexity; the sequence is NGSSKNKSGSK. The PHD-type zinc finger occupies 200 to 252; the sequence is ETICGACGEAYANGEFWICCDICETWFHGKCVRITPAKAEHIKHYKCPGCSNK.

Belongs to the Alfin family. Interacts with H3K4me3 and to a lesser extent with H3K4me2.

Its subcellular location is the nucleus. In terms of biological role, histone-binding component that specifically recognizes H3 tails trimethylated on 'Lys-4' (H3K4me3), which mark transcription start sites of virtually all active genes. The chain is PHD finger protein ALFIN-LIKE 4 from Oryza sativa subsp. indica (Rice).